We begin with the raw amino-acid sequence, 346 residues long: Heparan sulfate glucosamine 3-O-sulfotransferase 5 (346 aa).

The Cytoplasmic segment spans residues 1–12; it reads MLFKQQAWLRQK. Residues 13–32 form a helical; Signal-anchor for type II membrane protein membrane-spanning segment; it reads LLVLGSLAVGSLLYLVARVG. The Lumenal segment spans residues 33 to 346; the sequence is SLDRLQPICP…QITGRTLNWP (314 aa). 100 to 104 is a 3'-phosphoadenylyl sulfate binding site; the sequence is KGGTR. Substrate is bound by residues 122–128 and 155–158; these read EIHFFDN and KSPA. 2 residues coordinate 3'-phosphoadenylyl sulfate: Arg183 and Ser191. 226 to 227 provides a ligand contact to substrate; it reads YK. The N-linked (GlcNAc...) asparagine glycan is linked to Asn287. Tyr293 contacts 3'-phosphoadenylyl sulfate. A disulfide bridge links Cys294 with Cys304. Residue 309 to 313 participates in 3'-phosphoadenylyl sulfate binding; that stretch reads KGRIH.

Belongs to the sulfotransferase 1 family. Highly expressed in skeletal muscle and fetal brain, and also found in adult brain, spinal cord, cerebellum and colon.

The protein resides in the golgi apparatus membrane. It carries out the reaction alpha-D-glucosaminyl-[heparan sulfate](n) + 3'-phosphoadenylyl sulfate = 3-sulfo-alpha-D-glucosaminyl-[heparan sulfate](n) + adenosine 3',5'-bisphosphate + H(+). Sulfotransferase that utilizes 3'-phospho-5'-adenylyl sulfate (PAPS) to catalyze the transfer of a sulfo group to position 3 of glucosamine residues in heparan. Catalyzes the rate limiting step in the biosynthesis of heparan sulfate (HSact). This modification is a crucial step in the biosynthesis of anticoagulant heparan sulfate as it completes the structure of the antithrombin pentasaccharide binding site. Also generates GlcUA-GlcNS or IdoUA-GlcNS and IdoUA2S-GlcNH2. The substrate-specific O-sulfation generates an enzyme-modified heparan sulfate which acts as a binding receptor to Herpes simplex virus-1 (HSV-1) and permits its entry. The chain is Heparan sulfate glucosamine 3-O-sulfotransferase 5 (HS3ST5) from Homo sapiens (Human).